We begin with the raw amino-acid sequence, 662 residues long: MPLRDKYCQTDHHHHGCCEPVYILEPGDPPLLQQPVQTSKSGIQQIIECFRSGTKQLKHILLKDVDTIFECKLCRSLFRGLPNLITHKKFYCPPSLQMDDNLPDVNDKQSQAISDLLEAIYPRVDKREYIIKLEPIETNQNAVFQYISRTDNPAEVTESSSTPEQTEVQIQETSSEQLKAVPDADTEVEEAIEPPSIETVVDEAAAPTEEQPQESQADLETSDSSDLGHQLICCLCRKEFNSRRGVRRHIRKVHKKKMEELKKYIETRKTPNQSSKGRSKSVLVSLSRSCPVCCKSFATKANVRRHFDEVHRGLRRDSITPDIATKPGQPLFLDSASPKKSFKTRKQKSSKAEYNLTACKCLLCKRKYSSQIMLKRHMQIVHKITLSGANSKREKGPNNTANSSEVKVELADSVESSPPSITHSPQNELKGTNHSNEKKNTPATQKNKVKQDSESPKSASPSAAGGQQKTRKPKLSAGFDFKQLYCKLCKRQFTSKQNLTKHIELHTDGNNIYVKFYKCPLCTYETRRKRDVIRHITVVHKKSSRYLGKITASLEIRAIKKPIDFVLNKVAKRGPSREEAKHNDSKQDGTSNSPSKKYEVADVGIEVKVTKNFSLHRCNKCGKAFAKKTYLEHHKKTHKANATNSPEGNKTKGRSTRSKALV.

The C2H2-type 1; degenerate zinc-finger motif lies at 69 to 91; the sequence is FECKLCRSLFRGLPNLITHKKFY. Residue lysine 132 forms a Glycyl lysine isopeptide (Lys-Gly) (interchain with G-Cter in SUMO2) linkage. 2 disordered regions span residues 172–197 and 205–224; these read ETSSEQLKAVPDADTEVEEAIEPPSI and AAPTEEQPQESQADLETSDS. Over residues 205–216 the composition is skewed to low complexity; sequence AAPTEEQPQESQ. Residues 231 to 254 form a C2H2-type 2 zinc finger; that stretch reads LICCLCRKEFNSRRGVRRHIRKVH. A Glycyl lysine isopeptide (Lys-Gly) (interchain with G-Cter in SUMO2) cross-link involves residue lysine 280. The C2H2-type 3 zinc-finger motif lies at 288-311; sequence RSCPVCCKSFATKANVRRHFDEVH. Serine 318 carries the phosphoserine modification. A disordered region spans residues 319-349; the sequence is ITPDIATKPGQPLFLDSASPKKSFKTRKQKS. A Phosphothreonine modification is found at threonine 320. Phosphoserine is present on serine 337. The span at 340–349 shows a compositional bias: basic residues; the sequence is KSFKTRKQKS. The segment at 357-382 adopts a C2H2-type 4 zinc-finger fold; sequence TACKCLLCKRKYSSQIMLKRHMQIVH. Residues 389 to 473 form a disordered region; sequence ANSKREKGPN…AGGQQKTRKP (85 aa). Lysine 392 is covalently cross-linked (Glycyl lysine isopeptide (Lys-Gly) (interchain with G-Cter in SUMO2)). Positions 414–434 are enriched in polar residues; it reads VESSPPSITHSPQNELKGTNH. Phosphoserine is present on residues serine 420, serine 424, serine 453, serine 455, serine 458, and serine 460. Over residues 456–468 the composition is skewed to low complexity; the sequence is PKSASPSAAGGQQ. A Glycyl lysine isopeptide (Lys-Gly) (interchain with G-Cter in SUMO2) cross-link involves residue lysine 474. 2 consecutive C2H2-type zinc fingers follow at residues 484–506 and 517–540; these read LYCKLCKRQFTSKQNLTKHIELH and YKCPLCTYETRRKRDVIRHITVVH. 2 disordered regions span residues 573–597 and 633–662; these read RGPSREEAKHNDSKQDGTSNSPSKK and HHKKTHKANATNSPEGNKTKGRSTRSKALV. Basic and acidic residues predominate over residues 575-587; sequence PSREEAKHNDSKQ. Lysine 597 is covalently cross-linked (Glycyl lysine isopeptide (Lys-Gly) (interchain with G-Cter in SUMO2)). The C2H2-type 7 zinc finger occupies 616–638; the sequence is HRCNKCGKAFAKKTYLEHHKKTH. Positions 651–662 are enriched in basic residues; that stretch reads TKGRSTRSKALV.

The protein belongs to the krueppel C2H2-type zinc-finger protein family.

It localises to the nucleus. May be involved in transcriptional regulation. This Mus musculus (Mouse) protein is Zinc finger protein 800 (Znf800).